A 344-amino-acid polypeptide reads, in one-letter code: Uroporphyrinogen decarboxylase (344 aa).

Substrate is bound by residues 23–27 (RQAGR), Asp73, Tyr149, Thr204, and His321.

This sequence belongs to the uroporphyrinogen decarboxylase family. Homodimer.

It localises to the cytoplasm. It catalyses the reaction uroporphyrinogen III + 4 H(+) = coproporphyrinogen III + 4 CO2. It participates in porphyrin-containing compound metabolism; protoporphyrin-IX biosynthesis; coproporphyrinogen-III from 5-aminolevulinate: step 4/4. In terms of biological role, catalyzes the decarboxylation of four acetate groups of uroporphyrinogen-III to yield coproporphyrinogen-III. The polypeptide is Uroporphyrinogen decarboxylase (Francisella tularensis subsp. mediasiatica (strain FSC147)).